Here is a 662-residue protein sequence, read N- to C-terminus: uncharacterized protein (662 aa).

Disordered regions lie at residues 1 to 94, 107 to 237, 288 to 328, 406 to 440, and 506 to 580; these read MSQR…NENN, DHNN…VKYH, ETTS…TPSA, QSSFLNKPTNNTETPTTTTTTTTTTTTTPSQPIQM, and QNSI…MVSP. Positions 25-49 are enriched in low complexity; it reads TTTTTPTPTTTTTTTSSLSSSTSST. Over residues 77–87 the composition is skewed to basic and acidic residues; that stretch reads DNIKLDNEKTF. The span at 109–161 shows a compositional bias: low complexity; the sequence is NNNNNNNNNNNNNNNNNNNNNNNNNNNNNNNNNNNNNNNNNNNNNNNNNNNNN. A compositionally biased stretch (polar residues) spans 162 to 176; sequence DTQKGTNKNENNCTD. Residues 183–196 are compositionally biased toward low complexity; it reads STSTTSSSETGSST. Positions 203–212 are enriched in polar residues; the sequence is KTPQSCLKKS. Low complexity predominate over residues 213–224; sequence NNNNNDNNNNNN. The segment covering 226–235 has biased composition (basic residues); sequence KTPRSTKKVK. Low complexity-rich tracts occupy residues 288–308, 413–434, 515–526, and 535–575; these read ETTSVTSTTSTATTTTTTPIP, PTNNTETPTTTTTTTTTTTTTP, PTKSSSSTSIQQ, and NINN…NNNN.

This is an uncharacterized protein from Dictyostelium discoideum (Social amoeba).